A 245-amino-acid chain; its full sequence is 1-(5-phosphoribosyl)-5-[(5-phosphoribosylamino)methylideneamino] imidazole-4-carboxamide isomerase (245 aa).

D8 serves as the catalytic Proton acceptor. D130 serves as the catalytic Proton donor.

This sequence belongs to the HisA/HisF family.

It localises to the cytoplasm. It catalyses the reaction 1-(5-phospho-beta-D-ribosyl)-5-[(5-phospho-beta-D-ribosylamino)methylideneamino]imidazole-4-carboxamide = 5-[(5-phospho-1-deoxy-D-ribulos-1-ylimino)methylamino]-1-(5-phospho-beta-D-ribosyl)imidazole-4-carboxamide. It participates in amino-acid biosynthesis; L-histidine biosynthesis; L-histidine from 5-phospho-alpha-D-ribose 1-diphosphate: step 4/9. This is 1-(5-phosphoribosyl)-5-[(5-phosphoribosylamino)methylideneamino] imidazole-4-carboxamide isomerase from Pseudomonas fluorescens (strain Pf0-1).